A 558-amino-acid chain; its full sequence is Serine palmitoyltransferase 1 (558 aa).

The Lumenal portion of the chain corresponds to 1–49 (MAHIPEVLPKSIPIPAFIVTTSSYLWYYFNLVLTQIPGGQFIVSYIKKS). The chain crosses the membrane as a helical span at residues 50–84 (HHDDPYRTTVEIGLILYGIIYYLSKPQQKKSLQAQ). At 85–341 (KPNLSPQEID…GRGLSEHFNM (257 aa)) the chain is on the cytoplasmic side. Thr121 is modified (phosphothreonine). Residues 342 to 371 (DRATAIDITVGSMATALGSTGGFVLGDSVM) traverse the membrane as a helical segment. The Lumenal portion of the chain corresponds to 372–424 (CLHQRIGSNAYCFSACLPAYTVTSVSKVLKLMDSNNDAVQTLQKLSKSLHDSF). The chain crosses the membrane as a helical span at residues 425–457 (ASDDSLRSYVIVTSSPVSAVLHLQLTPAYRSRK). Topologically, residues 458–558 (FGYTCEQLFE…ILACCQESNK (101 aa)) are cytoplasmic.

This sequence belongs to the class-II pyridoxal-phosphate-dependent aminotransferase family. In terms of assembly, LCB1 and LCB2 encode essential subunits of the enzyme and form a heterodimer. Component of the SPOTS complex, at least composed of LCB1/2 (LCB1 and/or LCB2), ORM1/2 (ORM1 and/or ORM2), SAC1 and TSC3. Interacts with LCB2 and TSC3. The cofactor is pyridoxal 5'-phosphate.

The protein resides in the cytoplasm. It localises to the endoplasmic reticulum membrane. The enzyme catalyses L-serine + hexadecanoyl-CoA + H(+) = 3-oxosphinganine + CO2 + CoA. Its pathway is lipid metabolism; sphingolipid metabolism. Functionally, component of serine palmitoyltransferase (SPT), which catalyzes the committed step in the synthesis of sphingolipids, the condensation of serine with palmitoyl CoA to form the long chain base 3-ketosphinganine. This Saccharomyces cerevisiae (strain ATCC 204508 / S288c) (Baker's yeast) protein is Serine palmitoyltransferase 1 (LCB1).